The following is a 979-amino-acid chain: UPF0182 protein Rv0064 (979 aa).

7 consecutive transmembrane segments (helical) span residues 19 to 41 (LVTA…DIYV), 63 to 85 (LAIV…LLAY), 114 to 136 (LFGW…FDWV), 174 to 196 (WLFV…FGGL), 208 to 230 (AARV…AYWL), 261 to 280 (LVLV…AIFL), and 285 to 307 (IPAM…WPLL). Positions 898 to 948 (GTGRVATARGGDAASAPPPGAGGPAPPQAVPPPRTTQPPAAPPRGPDVPPA) are disordered. The segment covering 913–946 (APPPGAGGPAPPQAVPPPRTTQPPAAPPRGPDVP) has biased composition (pro residues).

The protein belongs to the UPF0182 family.

It is found in the cell membrane. This chain is UPF0182 protein Rv0064, found in Mycobacterium tuberculosis (strain ATCC 25618 / H37Rv).